Consider the following 663-residue polypeptide: DNA ligase (663 aa).

NAD(+) is bound by residues 33–37 (DQEFD), 82–83 (SL), and Glu-113. Lys-115 functions as the N6-AMP-lysine intermediate in the catalytic mechanism. The NAD(+) site is built by Arg-136, Glu-170, Lys-286, and Lys-310. Zn(2+) is bound by residues Cys-404, Cys-407, Cys-422, and Cys-427. The BRCT domain occupies 587-663 (SSDPSLTGKL…IEESDLEDFL (77 aa)).

It belongs to the NAD-dependent DNA ligase family. LigA subfamily. Requires Mg(2+) as cofactor. Mn(2+) is required as a cofactor.

It carries out the reaction NAD(+) + (deoxyribonucleotide)n-3'-hydroxyl + 5'-phospho-(deoxyribonucleotide)m = (deoxyribonucleotide)n+m + AMP + beta-nicotinamide D-nucleotide.. Its function is as follows. DNA ligase that catalyzes the formation of phosphodiester linkages between 5'-phosphoryl and 3'-hydroxyl groups in double-stranded DNA using NAD as a coenzyme and as the energy source for the reaction. It is essential for DNA replication and repair of damaged DNA. The sequence is that of DNA ligase from Natranaerobius thermophilus (strain ATCC BAA-1301 / DSM 18059 / JW/NM-WN-LF).